The chain runs to 25 residues: Androctonin (25 aa).

2 disulfide bridges follow: C4–C20 and C10–C16.

Its subcellular location is the secreted. Its function is as follows. Active against both bacteria (Gram-positive and Gram-negative) and filamentous fungi. Acts on the membrane of the bacterial cells. It destabilize a membrane by modifying its properties. The chain is Androctonin from Androctonus australis (Sahara scorpion).